We begin with the raw amino-acid sequence, 633 residues long: Histone-lysine N-methyltransferase Su(var)3-9 (633 aa).

One can recognise a Chromo domain in the interval 213–271 (YIVEKIESVEVVQFQPVFFVKWLGYDVSANTWESYVNLSDCAEMEKFVERHLQLHQHYI). The 66-residue stretch at 407–472 (VGCMCRHQSG…SCTNRVVQNG (66 aa)) folds into the Pre-SET domain. C409, C411, C419, C425, C426, C454, C458, C460, and C464 together coordinate Zn(2+). In terms of domain architecture, SET spans 475–601 (HPLVLFKTSN…AGEELSFDYI (127 aa)). S-adenosyl-L-methionine-binding positions include 486–488 (SGW), Y529, and 558–559 (NH). Residues C561, C621, C623, and C628 each contribute to the Zn(2+) site. Residues 617 to 633 (ARVQCRCGAANCRKVLF) enclose the Post-SET domain.

It belongs to the class V-like SAM-binding methyltransferase superfamily. Histone-lysine methyltransferase family. Suvar3-9 subfamily. As to quaternary structure, interacts with Su(var)205 and Su(var)3-7. Probably associates with HDAC1/Rpd3.

It localises to the nucleus. Its subcellular location is the chromosome. It is found in the centromere. It carries out the reaction L-lysyl(9)-[histone H3] + 3 S-adenosyl-L-methionine = N(6),N(6),N(6)-trimethyl-L-lysyl(9)-[histone H3] + 3 S-adenosyl-L-homocysteine + 3 H(+). In terms of biological role, histone methyltransferase that specifically trimethylates 'Lys-9' of histone H3 using monomethylated H3 'Lys-9' as substrate. H3 'Lys-9' trimethylation represents a specific tag for epigenetic transcriptional repression by recruiting Su(var)205/HP1 to methylated histones. Mainly functions in heterochromatin regions, thereby playing a central role in the establishment of constitutive heterochromatin at pericentric regions. Involved in heterochromatic gene silencing including the modification of position-effect-variegation. This Drosophila pseudoobscura pseudoobscura (Fruit fly) protein is Histone-lysine N-methyltransferase Su(var)3-9 (Su(var)3-9).